The primary structure comprises 310 residues: Dopamine receptor-interacting protein 1 (310 aa).

As to quaternary structure, interacts with DRD1.

Functionally, could be a regulator of the dopamine receptor signaling pathway. This Homo sapiens (Human) protein is Dopamine receptor-interacting protein 1.